Reading from the N-terminus, the 340-residue chain is Transcription initiation factor IIB (340 aa).

The TFIIB-type zinc-finger motif lies at 16–49; it reads VKMICSECREDPPNLVEEFSSGDTVCGSCGLVLG. Residues Cys20, Cys23, Cys41, and Cys44 each contribute to the Zn(2+) site. A run of 2 repeats spans residues 128 to 204 and 239 to 315.

Belongs to the TFIIB family. Associates with TFIID-IIA (DA complex) to form TFIID-IIA-IIB (DAB-complex) which is then recognized by polymerase II.

The protein resides in the nucleus. In terms of biological role, general factor that plays a major role in the activation of eukaryotic genes transcribed by RNA polymerase II. The sequence is that of Transcription initiation factor IIB (sua7) from Schizosaccharomyces pombe (strain 972 / ATCC 24843) (Fission yeast).